The primary structure comprises 735 residues: Transcription factor sphG (735 aa).

A DNA-binding region (zn(2)-C6 fungal-type) is located at residues 13 to 40; it reads CDQCRARKIRCSREKPSCRNCGRLGLQC. The interval 89 to 110 is disordered; it reads TISPSARCPASPASPSPRLSDK. A compositionally biased stretch (low complexity) spans 91 to 106; the sequence is SPSARCPASPASPSPR.

It localises to the nucleus. Transcription factor that regulates the expression of the gene cluster that mediates the biosynthesis of sphingofungins, bioactive molecules acting as sphingolipid inhibitors via inhibiting serine palmitoyl transferase (SPT). The polypeptide is Transcription factor sphG (Aspergillus fumigatus (strain CBS 144.89 / FGSC A1163 / CEA10) (Neosartorya fumigata)).